A 282-amino-acid chain; its full sequence is Aquaporin PIP2-7 (282 aa).

The tract at residues 1–21 (MSKEVSVEGEQPPVKDYTDPP) is disordered. Topologically, residues 1 to 38 (MSKEVSVEGEQPPVKDYTDPPPEPLLNFGELRLWSFYR) are cytoplasmic. Residues 39–59 (ALIAEFVATLLFLYVTIATVI) form a helical membrane-spanning segment. The Extracellular segment spans residues 60-71 (GHKEQNAADQCS). A helical transmembrane segment spans residues 72-92 (GVGLLGIAWAFGGMIFILVYC). Residues 93-120 (TAGISGGHINPAVTLGLFLARKVSLIRA) are Cytoplasmic-facing. The NPA 1 signature appears at 102–104 (NPA). Residues 121–141 (LLYMVAQCLGAIVGVGIVKGI) form a helical membrane-spanning segment. Residues 142-162 (MKHQYNSLGGGANVVAAGYSK) lie on the Extracellular side of the membrane. Residues 163-183 (GTALGAEIIGTFVLVYTVFSA) form a helical membrane-spanning segment. Topologically, residues 184–196 (TDPKRSARDSHVP) are cytoplasmic. A helical transmembrane segment spans residues 197–217 (VLAPLPIGFAVFMVHLATIPI). Residues 218-244 (TGTGINPARSLGAAVIYNQDKPWDDHW) are Extracellular-facing. Positions 223 to 225 (NPA) match the NPA 2 motif. The chain crosses the membrane as a helical span at residues 245–265 (ILWVGPFVGALAAAAYHQYIL). The Cytoplasmic segment spans residues 266-282 (RAAAIKALGSFRSNPSN).

This sequence belongs to the MIP/aquaporin (TC 1.A.8) family. PIP (TC 1.A.8.11) subfamily. In terms of tissue distribution, expressed in roots, leaves and fruits.

It localises to the cell membrane. Water channel required to facilitate the transport of water across cell membrane; mercury-insensitive. Contributes to the tolerance to multiple abiotic stresses including salt (NaCl), cold and water deprivation, by modulating cytosolic K(+)/Na(+) ratio, maintaining osmotic balance, and reducing membrane injury (e.g. oxidative injury). Also regulates the expression of abscisic acid (ABA)- biosynthetic and -responsive genes during dehydration and salt stresses. This is Aquaporin PIP2-7 from Musa acuminata (Banana).